The primary structure comprises 1447 residues: ATP-dependent helicase SGS1 (1447 aa).

Disordered stretches follow at residues 37–78 (IANK…TATK), 243–264 (KKDGMSKDQSKGRSQVSSQDDN), 342–430 (KEGA…EEKE), 552–572 (KENEDFEEDNNNNGIEYLSDS), and 601–639 (TERKLTGDNEHPPPSWSPKIKREKSSVSQKDEEDDFDDD). Over residues 59-78 (GTTNFITSIPASGPTNTATK) the composition is skewed to polar residues. Basic and acidic residues predominate over residues 243-253 (KKDGMSKDQSK). Over residues 254–264 (GRSQVSSQDDN) the composition is skewed to polar residues. Positions 363–386 (ELTRRRNMRSREPVNYRIPDRDDP) are enriched in basic and acidic residues. Acidic residues-rich tracts occupy residues 403–415 (EREEDELTMEAED) and 552–561 (KENEDFEEDN). Over residues 601–611 (TERKLTGDNEH) the composition is skewed to basic and acidic residues. Residues 687–864 (VNATLQGKDV…IHNLELKEPV (178 aa)) form the Helicase ATP-binding domain. 714-721 (AVVKSGKT) provides a ligand contact to ATP. The DEAH box motif lies at 808–811 (DEAH). The region spanning 886–1035 (TIFEICDAVK…NKEKHLNKLQ (150 aa)) is the Helicase C-terminal domain. Positions 1272–1351 (LNNLRMTYER…ADLSKKRSSE (80 aa)) constitute an HRDC domain. Positions 1402 to 1411 (QIRQSQLPKN) are enriched in polar residues. The segment at 1402-1447 (QIRQSQLPKNTTSSKSGTRSISKSSKKSANGRRGFRNYRGHYRGRK) is disordered. Over residues 1412 to 1424 (TTSSKSGTRSISK) the composition is skewed to low complexity. Positions 1425 to 1447 (SSKKSANGRRGFRNYRGHYRGRK) are enriched in basic residues.

It belongs to the helicase family. RecQ subfamily. As to quaternary structure, heterodimer with TOP3. Forms a complex with TOP3 and RMI1. Forms a ternary complex with a MLH1-MLH3 heterodimer (MutLbeta) during meiosis. Interacts with TOP2. It depends on Mg(2+) as a cofactor.

The protein resides in the nucleus. It is found in the nucleolus. The enzyme catalyses Couples ATP hydrolysis with the unwinding of duplex DNA by translocating in the 3'-5' direction.. It carries out the reaction ATP + H2O = ADP + phosphate + H(+). Its activity is regulated as follows. Helicase activity on G-quadruplex DNA is inhibited by ATP-gamma-S. Its function is as follows. ATP-dependent 3'-5' DNA helicase able to unwind duplex DNA or DNA:RNA heteroduplex. Unwinds G-quadruplex DNA; unwinding occurs in the 3'-5' direction, requires a 3' single-stranded end of at least 7 nucleotides. Helicase activity is higher on G-quadruplex substrates than on duplex DNA substrates. Assayed with a catalytic fragment (residues 400-1268). Telomeres and rDNA are notably G-rich; formation of G-quadruplex DNA would block DNA replication and transcription. Acts as an integral component of the S-phase checkpoint response, which arrests cells due to DNA damage or blocked fork progression during DNA replication. Can create a deleterious topological substrate that TOP3 preferentially resolves. The TOP3-SGS1 protein complex may function as a eukaryotic reverse gyrase introducing positive supercoils into extrachromosomal ribosomal DNA rings. Together with topoisomerase II has a role in chromosomal segregation. Maintains rDNA structure where it has a role in re-starting stalled replication forks. The chain is ATP-dependent helicase SGS1 from Saccharomyces cerevisiae (strain ATCC 204508 / S288c) (Baker's yeast).